The chain runs to 180 residues: Peptide deformylase (180 aa).

Residues Cys-88 and His-130 each coordinate Fe cation. Glu-131 is an active-site residue. His-134 is a binding site for Fe cation.

It belongs to the polypeptide deformylase family. It depends on Fe(2+) as a cofactor.

The enzyme catalyses N-terminal N-formyl-L-methionyl-[peptide] + H2O = N-terminal L-methionyl-[peptide] + formate. Functionally, removes the formyl group from the N-terminal Met of newly synthesized proteins. Requires at least a dipeptide for an efficient rate of reaction. N-terminal L-methionine is a prerequisite for activity but the enzyme has broad specificity at other positions. The protein is Peptide deformylase of Acidothermus cellulolyticus (strain ATCC 43068 / DSM 8971 / 11B).